A 1391-amino-acid chain; its full sequence is DNA-directed RNA polymerase subunit beta (1391 aa).

Belongs to the RNA polymerase beta chain family. The RNAP catalytic core consists of 2 alpha, 1 beta, 1 beta' and 1 omega subunit. When a sigma factor is associated with the core the holoenzyme is formed, which can initiate transcription.

The enzyme catalyses RNA(n) + a ribonucleoside 5'-triphosphate = RNA(n+1) + diphosphate. DNA-dependent RNA polymerase catalyzes the transcription of DNA into RNA using the four ribonucleoside triphosphates as substrates. The chain is DNA-directed RNA polymerase subunit beta from Paramagnetospirillum magneticum (strain ATCC 700264 / AMB-1) (Magnetospirillum magneticum).